We begin with the raw amino-acid sequence, 204 residues long: Altered inheritance of mitochondria protein 20 (204 aa).

A helical transmembrane segment spans residues 6–26 (VAVGTAVGIPIAVGVIIALIF).

Belongs to the SKG1 family.

It is found in the vacuole membrane. Its function is as follows. Involved in cell cycle progression and surviving DNA damage. The chain is Altered inheritance of mitochondria protein 20 (AIM20) from Saccharomyces cerevisiae (strain JAY291) (Baker's yeast).